The sequence spans 246 residues: 1-(5-phosphoribosyl)-5-[(5-phosphoribosylamino)methylideneamino] imidazole-4-carboxamide isomerase (246 aa).

The active-site Proton acceptor is aspartate 8. Residue aspartate 131 is the Proton donor of the active site.

This sequence belongs to the HisA/HisF family.

The protein localises to the cytoplasm. It carries out the reaction 1-(5-phospho-beta-D-ribosyl)-5-[(5-phospho-beta-D-ribosylamino)methylideneamino]imidazole-4-carboxamide = 5-[(5-phospho-1-deoxy-D-ribulos-1-ylimino)methylamino]-1-(5-phospho-beta-D-ribosyl)imidazole-4-carboxamide. Its pathway is amino-acid biosynthesis; L-histidine biosynthesis; L-histidine from 5-phospho-alpha-D-ribose 1-diphosphate: step 4/9. The polypeptide is 1-(5-phosphoribosyl)-5-[(5-phosphoribosylamino)methylideneamino] imidazole-4-carboxamide isomerase (Delftia acidovorans (strain DSM 14801 / SPH-1)).